The following is a 509-amino-acid chain: Putative ATP-dependent RNA helicase QP509L (509 aa).

Residues 110-262 (KKLLSPYGRF…KIILHHLGQP (153 aa)) enclose the Helicase ATP-binding domain. Residue 123-130 (LNTGLGKT) coordinates ATP. Residues 215–218 (DEAH) carry the DEAH box motif.

It belongs to the DEAD box helicase family. DEAH subfamily.

It catalyses the reaction ATP + H2O = ADP + phosphate + H(+). The protein is Putative ATP-dependent RNA helicase QP509L of Ornithodoros (relapsing fever ticks).